We begin with the raw amino-acid sequence, 167 residues long: Sulfopyruvate decarboxylase subunit alpha (167 aa).

Belongs to the ComD family. As to quaternary structure, heterododecamer composed of 6 subunits alpha and 6 subunits beta.

The enzyme catalyses 3-sulfopyruvate + H(+) = sulfoacetaldehyde + CO2. It participates in cofactor biosynthesis; coenzyme M biosynthesis; sulfoacetaldehyde from phosphoenolpyruvate and sulfite: step 4/4. In terms of biological role, involved in the biosynthesis of the coenzyme M (2-mercaptoethanesulfonic acid). Catalyzes the decarboxylation of sulfopyruvate to sulfoacetaldehyde. The polypeptide is Sulfopyruvate decarboxylase subunit alpha (comD) (Methanococcus maripaludis (strain DSM 14266 / JCM 13030 / NBRC 101832 / S2 / LL)).